The following is a 316-amino-acid chain: Phosphate acyltransferase (316 aa).

This sequence belongs to the PlsX family. As to quaternary structure, homodimer. Probably interacts with PlsY.

The protein localises to the cytoplasm. It carries out the reaction a fatty acyl-[ACP] + phosphate = an acyl phosphate + holo-[ACP]. Its pathway is lipid metabolism; phospholipid metabolism. Its function is as follows. Catalyzes the reversible formation of acyl-phosphate (acyl-PO(4)) from acyl-[acyl-carrier-protein] (acyl-ACP). This enzyme utilizes acyl-ACP as fatty acyl donor, but not acyl-CoA. The sequence is that of Phosphate acyltransferase from Chlamydia abortus (strain DSM 27085 / S26/3) (Chlamydophila abortus).